Consider the following 230-residue polypeptide: Large ribosomal subunit protein uL1 (230 aa).

This sequence belongs to the universal ribosomal protein uL1 family. Part of the 50S ribosomal subunit.

Binds directly to 23S rRNA. The L1 stalk is quite mobile in the ribosome, and is involved in E site tRNA release. In terms of biological role, protein L1 is also a translational repressor protein, it controls the translation of the L11 operon by binding to its mRNA. The chain is Large ribosomal subunit protein uL1 from Chromohalobacter salexigens (strain ATCC BAA-138 / DSM 3043 / CIP 106854 / NCIMB 13768 / 1H11).